Reading from the N-terminus, the 446-residue chain is Exodeoxyribonuclease 7 large subunit (446 aa).

Belongs to the XseA family. Heterooligomer composed of large and small subunits.

The protein resides in the cytoplasm. It carries out the reaction Exonucleolytic cleavage in either 5'- to 3'- or 3'- to 5'-direction to yield nucleoside 5'-phosphates.. Functionally, bidirectionally degrades single-stranded DNA into large acid-insoluble oligonucleotides, which are then degraded further into small acid-soluble oligonucleotides. This Acholeplasma laidlawii (strain PG-8A) protein is Exodeoxyribonuclease 7 large subunit.